The following is a 180-amino-acid chain: ATP synthase subunit delta (180 aa).

It belongs to the ATPase delta chain family. In terms of assembly, F-type ATPases have 2 components, F(1) - the catalytic core - and F(0) - the membrane proton channel. F(1) has five subunits: alpha(3), beta(3), gamma(1), delta(1), epsilon(1). CF(0) has four main subunits: a(1), b(1), b'(1) and c(10-14). The alpha and beta chains form an alternating ring which encloses part of the gamma chain. F(1) is attached to F(0) by a central stalk formed by the gamma and epsilon chains, while a peripheral stalk is formed by the delta, b and b' chains.

It localises to the cellular thylakoid membrane. In terms of biological role, f(1)F(0) ATP synthase produces ATP from ADP in the presence of a proton or sodium gradient. F-type ATPases consist of two structural domains, F(1) containing the extramembraneous catalytic core and F(0) containing the membrane proton channel, linked together by a central stalk and a peripheral stalk. During catalysis, ATP synthesis in the catalytic domain of F(1) is coupled via a rotary mechanism of the central stalk subunits to proton translocation. Functionally, this protein is part of the stalk that links CF(0) to CF(1). It either transmits conformational changes from CF(0) to CF(1) or is implicated in proton conduction. In Prochlorococcus marinus (strain MIT 9312), this protein is ATP synthase subunit delta.